Reading from the N-terminus, the 326-residue chain is Vitamin B12 import system permease protein BtuC (326 aa).

9 consecutive transmembrane segments (helical) span residues 15–35, 61–81, 88–108, 112–132, 146–166, 184–204, 240–260, 274–294, and 302–322; these read WLLCLSVLMLLALLLSLCAGE, LAVLLVGAALAISGAVMQALF, PGLLGVSNGAGVGLIAAVLLG, LPNWALGLCAIAGALIITLIL, LLAGVALGIICSALMTWAIYF, GGVDWRQSWLMLALIPVLLWI, GWMVGVSVALAGAIGFIGLVI, VLLPGCALAGASALLLADVVA, and ELPIGVVTATLGAPVFIWLLL.

The protein belongs to the binding-protein-dependent transport system permease family. FecCD subfamily. In terms of assembly, the complex is composed of two ATP-binding proteins (BtuD), two transmembrane proteins (BtuC) and a solute-binding protein (BtuF).

Its subcellular location is the cell inner membrane. In terms of biological role, part of the ABC transporter complex BtuCDF involved in vitamin B12 import. Involved in the translocation of the substrate across the membrane. This Escherichia coli O17:K52:H18 (strain UMN026 / ExPEC) protein is Vitamin B12 import system permease protein BtuC.